A 360-amino-acid polypeptide reads, in one-letter code: Chorismate synthase (360 aa).

NADP(+)-binding residues include Arg-48 and Arg-54. FMN is bound by residues Arg-125–Ser-127, Asn-246–Ala-247, Gly-286, Lys-301–Ser-305, and Arg-327.

The protein belongs to the chorismate synthase family. In terms of assembly, homotetramer. The cofactor is FMNH2.

The catalysed reaction is 5-O-(1-carboxyvinyl)-3-phosphoshikimate = chorismate + phosphate. Its pathway is metabolic intermediate biosynthesis; chorismate biosynthesis; chorismate from D-erythrose 4-phosphate and phosphoenolpyruvate: step 7/7. In terms of biological role, catalyzes the anti-1,4-elimination of the C-3 phosphate and the C-6 proR hydrogen from 5-enolpyruvylshikimate-3-phosphate (EPSP) to yield chorismate, which is the branch point compound that serves as the starting substrate for the three terminal pathways of aromatic amino acid biosynthesis. This reaction introduces a second double bond into the aromatic ring system. This is Chorismate synthase from Actinobacillus pleuropneumoniae serotype 5b (strain L20).